Here is a 90-residue protein sequence, read N- to C-terminus: Small ribosomal subunit protein bS18 (90 aa).

The protein belongs to the bacterial ribosomal protein bS18 family. In terms of assembly, part of the 30S ribosomal subunit. Forms a tight heterodimer with protein bS6.

Binds as a heterodimer with protein bS6 to the central domain of the 16S rRNA, where it helps stabilize the platform of the 30S subunit. In Bordetella bronchiseptica (strain ATCC BAA-588 / NCTC 13252 / RB50) (Alcaligenes bronchisepticus), this protein is Small ribosomal subunit protein bS18.